The sequence spans 1527 residues: Peroxidasin (1527 aa).

Positions 1 to 23 (MRFMLLMLQLLGLLLLLAGGVQS) are cleaved as a signal peptide. The LRRNT domain occupies 24 to 53 (VYCPAGCTCLERTVRCIRAKLSAVPKLPQD). LRR repeat units follow at residues 51-74 (PQDT…AFSG), 75-98 (LAQL…ALNG), 99-122 (LTAL…IFQR), 124-146 (PRLE…LFDN), 147-170 (LPRL…GFNR), and 172-196 (NNLK…LWRR). 4 Ig-like C2-type domains span residues 236 to 322 (PQFL…QPVR), 365 to 453 (PHFT…ARIE), 458 to 545 (PEIL…ATIK), and 553 to 643 (PQLA…ALVT). 4 disulfide bridges follow: cysteine 257/cysteine 307, cysteine 388/cysteine 437, cysteine 479/cysteine 529, and cysteine 574/cysteine 627. Asparagine 419 carries an N-linked (GlcNAc...) asparagine glycan. Asparagine 616, asparagine 673, asparagine 682, asparagine 731, and asparagine 767 each carry an N-linked (GlcNAc...) asparagine glycan. Cysteine 768 and cysteine 784 are oxidised to a cystine. Aspartate 862 provides a ligand contact to heme b. The Proton acceptor role is filled by histidine 863. Position 864 (aspartate 864) interacts with Ca(2+). Disulfide bonds link cysteine 882–cysteine 892 and cysteine 886–cysteine 909. Ca(2+)-binding residues include threonine 941, tyrosine 943, aspartate 945, and serine 947. Residue asparagine 962 is glycosylated (N-linked (GlcNAc...) asparagine). Cysteine 994 and cysteine 1005 are joined by a disulfide. Heme b is bound by residues glutamate 1015 and histidine 1109. N-linked (GlcNAc...) asparagine glycans are attached at residues asparagine 1120 and asparagine 1213. Intrachain disulfides connect cysteine 1212/cysteine 1269 and cysteine 1310/cysteine 1336. A coiled-coil region spans residues 1403–1441 (NEERVSGLEELIGSFQKELKKLHKKLRKLEDSCNSADSE). The region spanning 1463-1524 (SHCVDDKGTT…PPEACCPHCP (62 aa)) is the VWFC domain.

It belongs to the peroxidase family. XPO subfamily. Homotrimer; disulfide-linked. Ca(2+) serves as cofactor. Heme b is required as a cofactor. As to expression, expressed in hemocytes. Also expressed in the fat body and gastric caeca.

It is found in the secreted. The enzyme catalyses (5R)-5-hydroxy-L-lysyl-[collagen] + L-methionyl-[collagen] + H2O2 = [collagen]-(5R)-5-hydroxy-L-lysyl-N-S-L-methionyl-[collagen] + 2 H2O + H(+). It carries out the reaction bromide + H2O2 = hypobromite + H2O. It catalyses the reaction (5R)-5-hydroxy-L-lysyl-[collagen] + L-methionyl-[collagen] + hypobromite = [collagen]-(5R)-5-hydroxy-L-lysyl-N-S-L-methionyl-[collagen] + bromide + H2O + H(+). The catalysed reaction is L-lysyl-[collagen] + L-methionyl-[collagen] + H2O2 = [collagen]-L-lysyl-N-S-L-methionyl-[collagen] + 2 H2O + H(+). The enzyme catalyses L-lysyl-[collagen] + L-methionyl-[collagen] + hypobromite = [collagen]-L-lysyl-N-S-L-methionyl-[collagen] + bromide + H2O + H(+). It carries out the reaction L-tyrosyl-[protein] + bromide + H2O2 + H(+) = 3-bromo-L-tyrosyl-[protein] + 2 H2O. It catalyses the reaction hypobromite + L-tyrosyl-[protein] + H(+) = 3-bromo-L-tyrosyl-[protein] + H2O. Catalyzes the two-electron oxidation of bromide by hydrogen peroxide and generates hypobromite as a reactive intermediate which mediates the formation of sulfilimine cross-links between methionine and hydroxylysine residues within an uncross-linked collagen IV NC1 hexamer. Plays a role in extracellular matrix consolidation, phagocytosis and defense. This chain is Peroxidasin, found in Drosophila melanogaster (Fruit fly).